We begin with the raw amino-acid sequence, 330 residues long: Aquaporin-3 (330 aa).

Residues 1–40 lie on the Cytoplasmic side of the membrane; the sequence is MSATPIIHLRDVKKRTGVLNAWERVRNKPQVHWAMECFAE. The helical transmembrane segment at 41–61 threads the bilayer; sequence ALGVFFYVYFGLGSTAAWVIG. Residues 62 to 71 are Extracellular-facing; that stretch reads NILKQSGLSS. The chain crosses the membrane as a helical span at residues 72-92; sequence VFQIGFAYAFGILFAIGVCAA. Residues 93–124 lie on the Cytoplasmic side of the membrane; the sequence is TSGGHFNPCVTIAFTIFRGFPPLKAVRYIVAQ. An NPA 1 motif is present at residues 99–101; it reads NPC. A helical transmembrane segment spans residues 125-145; it reads ILGAYIASALVYNQWKVLIVE. Over 146–157 the chain is Extracellular; sequence SELLLKQAGVYE. The chain crosses the membrane as a helical span at residues 158–178; the sequence is TTMFTPNGPAGIFALYLLPGA. Residues 179 to 183 are Cytoplasmic-facing; sequence QTLPR. Residues 184 to 204 form a helical membrane-spanning segment; the sequence is AFLNEFVNCFVLALVIWAALD. Over 205 to 207 the chain is Extracellular; it reads PTS. The helical transmembrane segment at 208-228 threads the bilayer; that stretch reads FMIPPVMAPFIIAAAYAGSIW. The Cytoplasmic segment spans residues 229 to 264; sequence GYAVPAISLNSARDIGCRLFALTIWGKSAAGGSYSA. Positions 238-240 match the NPA 2 motif; the sequence is NSA. The chain crosses the membrane as a helical span at residues 265 to 285; sequence IAALVNIPATLLAAVVYELFL. Residues 286 to 330 are Extracellular-facing; it reads VDSDRVVAGSHLEFMNVAANHRRHRQQAEDDNLVEADDSSQEKPV. A disordered region spans residues 308–330; sequence RHRQQAEDDNLVEADDSSQEKPV. Positions 314-324 are enriched in acidic residues; it reads EDDNLVEADDS.

This sequence belongs to the MIP/aquaporin (TC 1.A.8) family.

Its subcellular location is the cell membrane. It carries out the reaction H2O(in) = H2O(out). It catalyses the reaction CO2(out) = CO2(in). In terms of biological role, water channel required to facilitate the transport of water across membranes. Also mediates the transport of carbon dioxide across the membrane. The sequence is that of Aquaporin-3 from Laccaria bicolor (Bicoloured deceiver).